We begin with the raw amino-acid sequence, 369 residues long: Phenylalanine--tRNA ligase alpha subunit (369 aa).

Glu269 serves as a coordination point for Mg(2+).

Belongs to the class-II aminoacyl-tRNA synthetase family. Phe-tRNA synthetase alpha subunit type 1 subfamily. Tetramer of two alpha and two beta subunits. The cofactor is Mg(2+).

It localises to the cytoplasm. It carries out the reaction tRNA(Phe) + L-phenylalanine + ATP = L-phenylalanyl-tRNA(Phe) + AMP + diphosphate + H(+). In Brucella abortus (strain 2308), this protein is Phenylalanine--tRNA ligase alpha subunit.